Consider the following 290-residue polypeptide: uncharacterized protein (290 aa).

The next 6 helical transmembrane spans lie at 71-91 (FWSF…VKNI), 124-144 (GILI…LPGM), 155-175 (IIIG…YILV), 202-222 (FILV…LQLV), 234-254 (MFSI…VLTP), and 262-282 (ILLS…VLVV).

Belongs to the TatC family.

The protein localises to the plastid. Its subcellular location is the chloroplast membrane. This is an uncharacterized protein from Guillardia theta (Cryptophyte).